We begin with the raw amino-acid sequence, 228 residues long: Ribonuclease HII (228 aa).

One can recognise an RNase H type-2 domain in the interval 1 to 210; that stretch reads MKIAGIDEAG…LKKIAEKVES (210 aa). Residues D7, E8, and D105 each contribute to the a divalent metal cation site.

The protein belongs to the RNase HII family. In terms of assembly, monomer. The cofactor is Mn(2+). It depends on Mg(2+) as a cofactor.

It is found in the cytoplasm. The catalysed reaction is Endonucleolytic cleavage to 5'-phosphomonoester.. Its function is as follows. Endonuclease that specifically degrades the RNA of RNA-DNA hybrids. This Thermococcus kodakarensis (strain ATCC BAA-918 / JCM 12380 / KOD1) (Pyrococcus kodakaraensis (strain KOD1)) protein is Ribonuclease HII (rnhB).